The sequence spans 66 residues: Toxin Cll1 (66 aa).

Residues 1–66 (KEGYLVNKST…TYPLPNKSCS (66 aa)) enclose the LCN-type CS-alpha/beta domain. Cystine bridges form between Cys12–Cys65, Cys16–Cys41, Cys25–Cys46, and Cys29–Cys48.

It belongs to the long (4 C-C) scorpion toxin superfamily. Sodium channel inhibitor family. Beta subfamily. As to expression, expressed by the venom gland.

The protein resides in the secreted. Its function is as follows. Beta toxin that binds site-4 of sodium channels (Nav) and reduces peak current (observed on Nav1.1/SCN1A, Nav1.2/SCN2A, Nav1.3/SCN3A, Nav1.4/SCN5A, Nav1.5/SCN4A, and Nav1.6/SCN8A (IC(50)=44.9 nM)), shifts the voltage of activation toward more negative potentials (observed on Nav1.6, Nav1.1 (weak), Nav1.2 (weak), and Nav1.7 (weak)), and induces resurgent currents at negative voltages following brief and strong depolarizations (observed on Nav1.6, Nav1.1 (weak), Nav1.2 (weak), and Nav1.4 (weak)). This toxin is only active on crustaceans. The polypeptide is Toxin Cll1 (Centruroides limpidus (Mexican scorpion)).